Reading from the N-terminus, the 434-residue chain is Adenylosuccinate synthetase (434 aa).

GTP is bound by residues 12 to 18 (GDEGKGK) and 40 to 42 (GHT). The Proton acceptor role is filled by Asp-13. Residues Asp-13 and Gly-40 each contribute to the Mg(2+) site. IMP-binding positions include 13–16 (DEGK), 38–41 (NAGH), Thr-129, Arg-143, Gln-224, Thr-239, and Arg-303. The active-site Proton donor is the His-41. 299–305 (AVTGRPR) provides a ligand contact to substrate. GTP is bound by residues Arg-305, 331–333 (KLD), and 413–415 (STG).

This sequence belongs to the adenylosuccinate synthetase family. In terms of assembly, homodimer. Mg(2+) serves as cofactor.

Its subcellular location is the cytoplasm. The catalysed reaction is IMP + L-aspartate + GTP = N(6)-(1,2-dicarboxyethyl)-AMP + GDP + phosphate + 2 H(+). The protein operates within purine metabolism; AMP biosynthesis via de novo pathway; AMP from IMP: step 1/2. Its function is as follows. Plays an important role in the de novo pathway of purine nucleotide biosynthesis. Catalyzes the first committed step in the biosynthesis of AMP from IMP. This is Adenylosuccinate synthetase from Solibacter usitatus (strain Ellin6076).